We begin with the raw amino-acid sequence, 277 residues long: UPF0276 protein PP_2398 (277 aa).

Belongs to the UPF0276 family.

The chain is UPF0276 protein PP_2398 from Pseudomonas putida (strain ATCC 47054 / DSM 6125 / CFBP 8728 / NCIMB 11950 / KT2440).